The chain runs to 142 residues: Deoxyuridine 5'-triphosphate nucleotidohydrolase (142 aa).

Residues 62–64, Asn75, and 79–81 each bind substrate; these read RSG and TID.

It belongs to the dUTPase family. Requires Mg(2+) as cofactor.

The enzyme catalyses dUTP + H2O = dUMP + diphosphate + H(+). The protein operates within pyrimidine metabolism; dUMP biosynthesis; dUMP from dCTP (dUTP route): step 2/2. Functionally, this enzyme is involved in nucleotide metabolism: it produces dUMP, the immediate precursor of thymidine nucleotides and it decreases the intracellular concentration of dUTP so that uracil cannot be incorporated into DNA. This is Deoxyuridine 5'-triphosphate nucleotidohydrolase from Trichodesmium erythraeum (strain IMS101).